Here is a 367-residue protein sequence, read N- to C-terminus: Glutamate 5-kinase (367 aa).

Position 8 (Lys-8) interacts with ATP. Residues Ser-49, Asp-136, and Asn-148 each contribute to the substrate site. ATP-binding positions include 168-169 (TD) and 210-216 (TGGMATK). One can recognise a PUA domain in the interval 275–353 (TGKLYLDRGA…EEIPTILGYS (79 aa)).

The protein belongs to the glutamate 5-kinase family.

The protein resides in the cytoplasm. It carries out the reaction L-glutamate + ATP = L-glutamyl 5-phosphate + ADP. It participates in amino-acid biosynthesis; L-proline biosynthesis; L-glutamate 5-semialdehyde from L-glutamate: step 1/2. In terms of biological role, catalyzes the transfer of a phosphate group to glutamate to form L-glutamate 5-phosphate. The sequence is that of Glutamate 5-kinase from Cyanothece sp. (strain PCC 7425 / ATCC 29141).